Reading from the N-terminus, the 442-residue chain is Elongation factor 1-gamma (442 aa).

Residues 2-87 (AAGTLYTYPE…FLSNDALRGS (86 aa)) form the GST N-terminal domain. The region spanning 88 to 216 (TPQASAQVLQ…VKLCEKMAQF (129 aa)) is the GST C-terminal domain. 2 stretches are compositionally biased toward basic and acidic residues: residues 224–242 (MQPKKEAPAKKEKAGKEGG) and 249–263 (QEKKEKKKEEKKAAP). Residues 224–273 (MQPKKEAPAKKEKAGKEGGKQQQPQQEKKEKKKEEKKAAPAEEEMDECEA) form a disordered region. Residues 281–442 (AKDPYAHLPK…KSFNQGKIFK (162 aa)) form the EF-1-gamma C-terminal domain.

In terms of assembly, EF-1 is composed of four subunits: alpha, beta, delta, and gamma.

In terms of biological role, probably plays a role in anchoring the complex to other cellular components. This is Elongation factor 1-gamma (eef1g) from Carassius auratus (Goldfish).